The primary structure comprises 971 residues: Exportin-2 (971 aa).

Positions Ala29–Ser102 constitute an Importin N-terminal domain.

Belongs to the XPO2/CSE1 family. Interacts with cftr.

It localises to the cytoplasm. The protein localises to the nucleus. Its function is as follows. Export receptor for importin alpha. Mediates importin-alpha re-export from the nucleus to the cytoplasm after import substrates have been released into the nucleoplasm. Negatively regulates fluid secretion and plays a role in fluid homeostasis by down-regulating cftr activity. The sequence is that of Exportin-2 (cse1l) from Oreochromis niloticus (Nile tilapia).